The following is a 453-amino-acid chain: GTPase Der (453 aa).

EngA-type G domains lie at 4–169 and 177–352; these read PIVA…PPVT and IKIA…EEHK. GTP contacts are provided by residues 10–17, 57–61, 120–123, 183–190, 230–234, and 295–298; these read GRPNVGKS, DTGGL, NKCE, DTAGI, and NKWD. One can recognise a KH-like domain in the interval 353–438; sequence RRVSTSVINE…PIRLLWRSKK (86 aa).

It belongs to the TRAFAC class TrmE-Era-EngA-EngB-Septin-like GTPase superfamily. EngA (Der) GTPase family. In terms of assembly, associates with the 50S ribosomal subunit.

GTPase that plays an essential role in the late steps of ribosome biogenesis. The chain is GTPase Der from Nostoc sp. (strain PCC 7120 / SAG 25.82 / UTEX 2576).